A 981-amino-acid polypeptide reads, in one-letter code: Probable NAD kinase 2, chloroplastic (981 aa).

Residues 319-364 (APSAEQVQRFAEIVSDSAKKPIYLHSQEGISRTSAMVSRWKQYVTR) are calmodulin-binding. 2 disordered regions span residues 369–413 (ATQN…DRTM) and 551–601 (TNGK…AERN). Composition is skewed to polar residues over residues 387 to 406 (TEQLTNSPGFSSEGSENGTP), 551 to 563 (TNGKPSNNGASTS), and 581 to 596 (SDTSNSNGNAPLGSQK).

The protein belongs to the NAD kinase family.

It is found in the plastid. The protein localises to the chloroplast. The enzyme catalyses NAD(+) + ATP = ADP + NADP(+) + H(+). Its function is as follows. Involved in chlorophyll synthesis and chloroplast protection against oxidative damage. The protein is Probable NAD kinase 2, chloroplastic of Oryza sativa subsp. japonica (Rice).